Consider the following 185-residue polypeptide: Ribosome-recycling factor (185 aa).

It belongs to the RRF family.

It localises to the cytoplasm. Its function is as follows. Responsible for the release of ribosomes from messenger RNA at the termination of protein biosynthesis. May increase the efficiency of translation by recycling ribosomes from one round of translation to another. This is Ribosome-recycling factor from Saccharophagus degradans (strain 2-40 / ATCC 43961 / DSM 17024).